We begin with the raw amino-acid sequence, 604 residues long: NADPH oxidase activator (604 aa).

2 TPR repeats span residues 36–69 (SKIN…DKYL) and 71–103 (SSYY…LRGH). Disordered regions lie at residues 180–298 (FKPP…KLPS) and 383–581 (DIIP…PYQV). 2 stretches are compositionally biased toward low complexity: residues 194–215 (SATT…SPPS) and 225–243 (PSSS…SSSP). Residues 244–260 (KLPPTPKPSFGSSPPPS) show a composition bias toward pro residues. Over residues 261–284 (SSSSSSSSSSSSSSSISPLTNKTL) the composition is skewed to low complexity. The 76-residue stretch at 309 to 384 (KITLKVFYKD…EINEINVKDI (76 aa)) folds into the PB1 domain. Composition is skewed to low complexity over residues 396-424 (PDKT…SSSS), 435-453 (PKTT…TTST), and 467-483 (FGST…SSSS). The span at 502–528 (LLKQQNQTQSINIPPKVPTSSRPKMTQ) shows a compositional bias: polar residues. Low complexity predominate over residues 529–570 (SHSPPSSSPLSSYSTSFQSVSSPSLSSSYNGSTSSYGGFSSS). The WW domain maps to 573–604 (PPTPYPYQVLYTDSNEKYYLNTETNETFWELP).

Its function is as follows. May function as an activator of NOX1, a superoxide-producing NADPH oxidase. The chain is NADPH oxidase activator (ncfA) from Dictyostelium discoideum (Social amoeba).